The sequence spans 196 residues: Orotate phosphoribosyltransferase (196 aa).

117–125 provides a ligand contact to 5-phospho-alpha-D-ribose 1-diphosphate; the sequence is EDVVTTGLS. The orotate site is built by Thr121 and Arg149.

It belongs to the purine/pyrimidine phosphoribosyltransferase family. PyrE subfamily. As to quaternary structure, homodimer. Mg(2+) serves as cofactor.

The catalysed reaction is orotidine 5'-phosphate + diphosphate = orotate + 5-phospho-alpha-D-ribose 1-diphosphate. It participates in pyrimidine metabolism; UMP biosynthesis via de novo pathway; UMP from orotate: step 1/2. In terms of biological role, catalyzes the transfer of a ribosyl phosphate group from 5-phosphoribose 1-diphosphate to orotate, leading to the formation of orotidine monophosphate (OMP). The protein is Orotate phosphoribosyltransferase of Rhizorhabdus wittichii (strain DSM 6014 / CCUG 31198 / JCM 15750 / NBRC 105917 / EY 4224 / RW1) (Sphingomonas wittichii).